The primary structure comprises 261 residues: Hemin import ATP-binding protein HmuV (261 aa).

Residues 8–243 (IRVTDLSYSV…ESIRTAYGHE (236 aa)) enclose the ABC transporter domain. 40 to 47 (GRNGAGKS) lines the ATP pocket.

It belongs to the ABC transporter superfamily. Heme (hemin) importer (TC 3.A.1.14.5) family. As to quaternary structure, the complex is composed of two ATP-binding proteins (HmuV), two transmembrane proteins (HmuU) and a solute-binding protein (HmuT).

It is found in the cell membrane. Part of the ABC transporter complex HmuTUV involved in hemin import. Responsible for energy coupling to the transport system. In Deinococcus radiodurans (strain ATCC 13939 / DSM 20539 / JCM 16871 / CCUG 27074 / LMG 4051 / NBRC 15346 / NCIMB 9279 / VKM B-1422 / R1), this protein is Hemin import ATP-binding protein HmuV.